Here is a 450-residue protein sequence, read N- to C-terminus: Bifunctional protein GlmU (450 aa).

Positions M1–R228 are pyrophosphorylase. UDP-N-acetyl-alpha-D-glucosamine contacts are provided by residues L8–G11, K22, Q75, G80–T81, Y103–D105, G140, E154, N169, and N226. D105 serves as a coordination point for Mg(2+). N226 serves as a coordination point for Mg(2+). The tract at residues A229–L249 is linker. The N-acetyltransferase stretch occupies residues G250 to T450. R315 and K333 together coordinate UDP-N-acetyl-alpha-D-glucosamine. The active-site Proton acceptor is H345. The UDP-N-acetyl-alpha-D-glucosamine site is built by Y348 and N359. Acetyl-CoA-binding positions include A362, N368–Y369, S387, T405, and R422.

The protein in the N-terminal section; belongs to the N-acetylglucosamine-1-phosphate uridyltransferase family. It in the C-terminal section; belongs to the transferase hexapeptide repeat family. Homotrimer. Mg(2+) serves as cofactor.

Its subcellular location is the cytoplasm. The catalysed reaction is alpha-D-glucosamine 1-phosphate + acetyl-CoA = N-acetyl-alpha-D-glucosamine 1-phosphate + CoA + H(+). It catalyses the reaction N-acetyl-alpha-D-glucosamine 1-phosphate + UTP + H(+) = UDP-N-acetyl-alpha-D-glucosamine + diphosphate. It participates in nucleotide-sugar biosynthesis; UDP-N-acetyl-alpha-D-glucosamine biosynthesis; N-acetyl-alpha-D-glucosamine 1-phosphate from alpha-D-glucosamine 6-phosphate (route II): step 2/2. The protein operates within nucleotide-sugar biosynthesis; UDP-N-acetyl-alpha-D-glucosamine biosynthesis; UDP-N-acetyl-alpha-D-glucosamine from N-acetyl-alpha-D-glucosamine 1-phosphate: step 1/1. Its pathway is bacterial outer membrane biogenesis; LPS lipid A biosynthesis. Functionally, catalyzes the last two sequential reactions in the de novo biosynthetic pathway for UDP-N-acetylglucosamine (UDP-GlcNAc). The C-terminal domain catalyzes the transfer of acetyl group from acetyl coenzyme A to glucosamine-1-phosphate (GlcN-1-P) to produce N-acetylglucosamine-1-phosphate (GlcNAc-1-P), which is converted into UDP-GlcNAc by the transfer of uridine 5-monophosphate (from uridine 5-triphosphate), a reaction catalyzed by the N-terminal domain. This is Bifunctional protein GlmU from Ruegeria pomeroyi (strain ATCC 700808 / DSM 15171 / DSS-3) (Silicibacter pomeroyi).